Here is a 229-residue protein sequence, read N- to C-terminus: Ribonuclease 3 (229 aa).

One can recognise an RNase III domain in the interval 8–130 (LTELEKIVGY…IIGAIYLDSD (123 aa)). E43 contributes to the Mg(2+) binding site. D47 is a catalytic residue. Mg(2+) contacts are provided by D116 and E119. E119 is a catalytic residue. Residues 157–227 (DPKTRLQELL…ATAALEHLQE (71 aa)) enclose the DRBM domain. Residues 201–229 (SPFKGTGTSRRKAEQAAATAALEHLQESA) form a disordered region.

The protein belongs to the ribonuclease III family. As to quaternary structure, homodimer. Mg(2+) serves as cofactor.

Its subcellular location is the cytoplasm. It carries out the reaction Endonucleolytic cleavage to 5'-phosphomonoester.. Digests double-stranded RNA. Involved in the processing of primary rRNA transcript to yield the immediate precursors to the large and small rRNAs (23S and 16S). Processes some mRNAs, and tRNAs when they are encoded in the rRNA operon. Processes pre-crRNA and tracrRNA of type II CRISPR loci if present in the organism. This chain is Ribonuclease 3, found in Idiomarina loihiensis (strain ATCC BAA-735 / DSM 15497 / L2-TR).